A 344-amino-acid polypeptide reads, in one-letter code: uncharacterized protein (344 aa).

Residues 1–28 form the signal peptide; that stretch reads MNKKSLNIVATLGILLVLAFSGCVDQSA.

Belongs to the bacterial solute-binding protein 1 family. WtpA subfamily.

This is an uncharacterized protein from Methanococcus maripaludis (strain C7 / ATCC BAA-1331).